The following is a 252-amino-acid chain: Origin recognition complex subunit 6 (252 aa).

Residues 188 to 232 (REPGDVATPPRKRKKIVVEAPAKEMEKVEEMPHKPQKDEDLTQDY) form a disordered region. Residue Thr-195 is modified to Phosphothreonine. A compositionally biased stretch (basic and acidic residues) spans 208-232 (PAKEMEKVEEMPHKPQKDEDLTQDY). A Glycyl lysine isopeptide (Lys-Gly) (interchain with G-Cter in SUMO2) cross-link involves residue Lys-210. Phosphothreonine is present on Thr-229.

Belongs to the ORC6 family. Component of ORC, a complex composed of at least 6 subunits: ORC1, ORC2, ORC3, ORC4, ORC5 and ORC6. ORC is regulated in a cell-cycle dependent manner. It is sequentially assembled at the exit from anaphase of mitosis and disassembled as cells enter S phase. Interacts with DBF4.

Its subcellular location is the nucleus. Functionally, component of the origin recognition complex (ORC) that binds origins of replication. DNA-binding is ATP-dependent. The specific DNA sequences that define origins of replication have not been identified yet. ORC is required to assemble the pre-replication complex necessary to initiate DNA replication. Does not bind histone H3 and H4 trimethylation marks H3K9me3, H3K27me3 and H4K20me3. This Homo sapiens (Human) protein is Origin recognition complex subunit 6 (ORC6).